A 156-amino-acid polypeptide reads, in one-letter code: MSRRHSAEKREVIPDAKFGDVILTKFMNSIMYDGKKSVAEAIVYDAFDIIEQKARTEPLGVFKQALENVAPAIEVRSRRVGGATYQVPVEVRMERRQALAIRWIITAARGRNDKTMVDRLSAELMDAANNRGNAVKKREDTHRMAEANRAFSHYRW.

Belongs to the universal ribosomal protein uS7 family. As to quaternary structure, part of the 30S ribosomal subunit. Contacts proteins S9 and S11.

Functionally, one of the primary rRNA binding proteins, it binds directly to 16S rRNA where it nucleates assembly of the head domain of the 30S subunit. Is located at the subunit interface close to the decoding center, probably blocks exit of the E-site tRNA. This chain is Small ribosomal subunit protein uS7, found in Methylocella silvestris (strain DSM 15510 / CIP 108128 / LMG 27833 / NCIMB 13906 / BL2).